The primary structure comprises 464 residues: L-cysteine desulfhydrase-like protein lolT2 (464 aa).

The residue at position 227 (lysine 227) is an N6-(pyridoxal phosphate)lysine.

It belongs to the class-V pyridoxal-phosphate-dependent aminotransferase family. The cofactor is pyridoxal 5'-phosphate.

It functions in the pathway alkaloid biosynthesis. In terms of biological role, L-cysteine desulfhydrase-like protein; part of the gene cluster that mediates the biosynthesis of loline alkaloids, potent insecticidal agents composed of a pyrrolizidine ring system and an uncommon ether bridge linking carbons 2 and 7. Lolines are structurally differentiated by the various modifications of the L-amino group and include norloline, loline, N-methylloline, N-acetylloline, N-acetylnorloline, and N-formylloline. The first committed step is the condensation of O-acetyl-L-homoserine (derived from L-aspartic acid) and L-proline, probably catalyzed by the gamma-type pyridoxal 5'-phosphate(PLP)-dependent enzyme lolC, to give the diamino diacid, NACPP. Ensuing cyclization, decarboxylation, and acetylation steps yield 1-exo-acetamidopyrrolizidine (AcAP). LolO is required for installation of the ether bridge upon the pathway intermediate, 1-exo-acetamidopyrrolizidine (AcAP). In sequential 2-oxoglutarate- and O(2)-consuming steps, lolO removes hydrogens from C2 and C7 of AcAP to form both carbon-oxygen bonds in N-acetylnorloline (NANL), the precursor to all other lolines. The enzymes lolD, lolE, lolF and lolT have also been proposed to be involved in the ether-bridge installation. Further processing of the exocyclic moiety of NANL by fungal N-acetamidase (LolN), methyltransferase (LolM), and cytochrome P450 (LolP) enzymes, with occasional involvement of a plant acetyltransferase, generates the other known lolines. LolN transforms NANL to norlonine which is monomethylated and dimethylated to respectively lonine and N-methyllonine (NML) by lolM. LolP catalyzes hydroxylation of the methyl group in N-methylloline (NML) and further oxygenation to N-formylloline (NFL). A plant acetyltransferase is responsible for the acetylation of loline to form N-acetylloline (NAL). LolA might interact with aspartate kinase to prevent feedback inhibition of its activity by these end products and thereby promote production of L-homoserine from L-aspartate. This Epichloe uncinata (Endophyte fungus) protein is L-cysteine desulfhydrase-like protein lolT2.